Here is a 491-residue protein sequence, read N- to C-terminus: Aspartyl/glutamyl-tRNA(Asn/Gln) amidotransferase subunit B (491 aa).

The protein belongs to the GatB/GatE family. GatB subfamily. As to quaternary structure, heterotrimer of A, B and C subunits.

The catalysed reaction is L-glutamyl-tRNA(Gln) + L-glutamine + ATP + H2O = L-glutaminyl-tRNA(Gln) + L-glutamate + ADP + phosphate + H(+). The enzyme catalyses L-aspartyl-tRNA(Asn) + L-glutamine + ATP + H2O = L-asparaginyl-tRNA(Asn) + L-glutamate + ADP + phosphate + 2 H(+). Functionally, allows the formation of correctly charged Asn-tRNA(Asn) or Gln-tRNA(Gln) through the transamidation of misacylated Asp-tRNA(Asn) or Glu-tRNA(Gln) in organisms which lack either or both of asparaginyl-tRNA or glutaminyl-tRNA synthetases. The reaction takes place in the presence of glutamine and ATP through an activated phospho-Asp-tRNA(Asn) or phospho-Glu-tRNA(Gln). The polypeptide is Aspartyl/glutamyl-tRNA(Asn/Gln) amidotransferase subunit B (Burkholderia cenocepacia (strain ATCC BAA-245 / DSM 16553 / LMG 16656 / NCTC 13227 / J2315 / CF5610) (Burkholderia cepacia (strain J2315))).